Consider the following 219-residue polypeptide: Tetratricopeptide repeat protein 9A (219 aa).

Residues 1 to 49 (MERKGLAARSSGNPSPPALGEGPRPVPPPCVPSGGGAPERGQAGTAAEP) form a disordered region. The TPR 1 repeat unit spans residues 56-89 (AHEFKSQGAQCYKDKKFREAIGKYHRALLELKGL). A disordered region spans residues 94–115 (EERDARPASSAGVPKSSRLSEE). Phosphoserine is present on serine 102. TPR repeat units follow at residues 125–160 (IDCY…EGEN) and 161–194 (FKAL…QPTD).

The protein belongs to the TTC9 family.

This Mus musculus (Mouse) protein is Tetratricopeptide repeat protein 9A (Ttc9).